Consider the following 1438-residue polypeptide: DNA polymerase III PolC-type (1438 aa).

The Exonuclease domain occupies 422–578 (YVVFDVETTG…YDTEATAYIF (157 aa)).

This sequence belongs to the DNA polymerase type-C family. PolC subfamily.

Its subcellular location is the cytoplasm. The enzyme catalyses DNA(n) + a 2'-deoxyribonucleoside 5'-triphosphate = DNA(n+1) + diphosphate. In terms of biological role, required for replicative DNA synthesis. This DNA polymerase also exhibits 3' to 5' exonuclease activity. This chain is DNA polymerase III PolC-type, found in Staphylococcus aureus (strain Mu3 / ATCC 700698).